The sequence spans 322 residues: Aspartate carbamoyltransferase catalytic subunit (322 aa).

Positions 65 and 66 each coordinate carbamoyl phosphate. Lys93 is an L-aspartate binding site. The carbamoyl phosphate site is built by Arg115, His143, and Gln146. Residues Arg176 and Arg230 each coordinate L-aspartate. Residues Gly271 and Pro272 each contribute to the carbamoyl phosphate site.

This sequence belongs to the aspartate/ornithine carbamoyltransferase superfamily. ATCase family. As to quaternary structure, heterododecamer (2C3:3R2) of six catalytic PyrB chains organized as two trimers (C3), and six regulatory PyrI chains organized as three dimers (R2).

The catalysed reaction is carbamoyl phosphate + L-aspartate = N-carbamoyl-L-aspartate + phosphate + H(+). It functions in the pathway pyrimidine metabolism; UMP biosynthesis via de novo pathway; (S)-dihydroorotate from bicarbonate: step 2/3. Catalyzes the condensation of carbamoyl phosphate and aspartate to form carbamoyl aspartate and inorganic phosphate, the committed step in the de novo pyrimidine nucleotide biosynthesis pathway. In Brucella anthropi (strain ATCC 49188 / DSM 6882 / CCUG 24695 / JCM 21032 / LMG 3331 / NBRC 15819 / NCTC 12168 / Alc 37) (Ochrobactrum anthropi), this protein is Aspartate carbamoyltransferase catalytic subunit.